Reading from the N-terminus, the 183-residue chain is MTAQELSIRYEVPGARRFGNYIWGSLMCLGGLGFLTIGISSYLDFPILSLVKSSNIQFFPQGLVMCFYGVLGFLLGVYIWLLILWNLGEGFNEFNLETGYVRIFRWGFPGKNRRIDLQYPIQEIQSIRVEIQEGINPKRIIYLKLRGNREIPLTRAGQPLSIQQIETQAAELAKFLQVSLEGI.

2 consecutive transmembrane segments (helical) span residues 21 to 43 and 63 to 85; these read YIWGSLMCLGGLGFLTIGISSYL and LVMCFYGVLGFLLGVYIWLLILW.

Belongs to the Ycf4 family.

The protein resides in the plastid. It localises to the chloroplast thylakoid membrane. In terms of biological role, seems to be required for the assembly of the photosystem I complex. The protein is Photosystem I assembly protein Ycf4 of Chlorella vulgaris (Green alga).